Consider the following 829-residue polypeptide: Periplasmic nitrate reductase (829 aa).

Residues 1–30 (MKLSRRDFMKANAVAAAAAVAGVSAPTLAA) constitute a signal peptide (tat-type signal). The 4Fe-4S Mo/W bis-MGD-type domain occupies 41 to 97 (IKWDKAPCRFCGTGCSVLVGSQDGRVVATQGDPDAPVNRGLNCIKGYFLSKIMYGED). Residues cysteine 48, cysteine 51, cysteine 55, and cysteine 83 each coordinate [4Fe-4S] cluster. Mo-bis(molybdopterin guanine dinucleotide) contacts are provided by residues lysine 85, glutamine 152, asparagine 177, cysteine 181, 214 to 221 (WGSNMAEM), 245 to 249 (STFEH), 264 to 266 (QTD), methionine 374, glutamine 378, asparagine 484, 510 to 511 (SD), lysine 533, aspartate 560, and 719 to 728 (TGRVLEHWHT). Substrate is bound at residue phenylalanine 795. Residues asparagine 803 and lysine 820 each contribute to the Mo-bis(molybdopterin guanine dinucleotide) site.

It belongs to the prokaryotic molybdopterin-containing oxidoreductase family. NasA/NapA/NarB subfamily. In terms of assembly, component of the periplasmic nitrate reductase NapAB complex composed of NapA and NapB. Requires [4Fe-4S] cluster as cofactor. Mo-bis(molybdopterin guanine dinucleotide) is required as a cofactor. In terms of processing, predicted to be exported by the Tat system. The position of the signal peptide cleavage has not been experimentally proven.

The protein localises to the periplasm. The catalysed reaction is 2 Fe(II)-[cytochrome] + nitrate + 2 H(+) = 2 Fe(III)-[cytochrome] + nitrite + H2O. Functionally, catalytic subunit of the periplasmic nitrate reductase complex NapAB. Receives electrons from NapB and catalyzes the reduction of nitrate to nitrite. This Aeromonas salmonicida (strain A449) protein is Periplasmic nitrate reductase.